The sequence spans 75 residues: uncharacterized protein (75 aa).

In terms of domain architecture, Glutaredoxin spans 1-75 (MIKIYSTPTC…KAEIDKLIEK (75 aa)). A disulfide bond links cysteine 10 and cysteine 13.

This sequence belongs to the glutaredoxin family.

This is an uncharacterized protein from Clostridium pasteurianum.